Here is a 99-residue protein sequence, read N- to C-terminus: DNA-binding protein Fis (99 aa).

A DNA-binding region (H-T-H motif) is located at residues 75–94; it reads QTRAANMLGINRGTLRKKLK.

Belongs to the transcriptional regulatory Fis family. As to quaternary structure, homodimer.

Activates ribosomal RNA transcription. Plays a direct role in upstream activation of rRNA promoters. The chain is DNA-binding protein Fis from Haemophilus influenzae (strain 86-028NP).